Consider the following 186-residue polypeptide: Acireductone dioxygenase (186 aa).

His96, His98, Glu102, and His140 together coordinate Fe(2+). Residues His96, His98, Glu102, and His140 each coordinate Ni(2+).

This sequence belongs to the acireductone dioxygenase (ARD) family. As to quaternary structure, monomer. Fe(2+) serves as cofactor. It depends on Ni(2+) as a cofactor.

The catalysed reaction is 1,2-dihydroxy-5-(methylsulfanyl)pent-1-en-3-one + O2 = 3-(methylsulfanyl)propanoate + CO + formate + 2 H(+). It catalyses the reaction 1,2-dihydroxy-5-(methylsulfanyl)pent-1-en-3-one + O2 = 4-methylsulfanyl-2-oxobutanoate + formate + 2 H(+). It participates in amino-acid biosynthesis; L-methionine biosynthesis via salvage pathway; L-methionine from S-methyl-5-thio-alpha-D-ribose 1-phosphate: step 5/6. Functionally, catalyzes 2 different reactions between oxygen and the acireductone 1,2-dihydroxy-3-keto-5-methylthiopentene (DHK-MTPene) depending upon the metal bound in the active site. Fe-containing acireductone dioxygenase (Fe-ARD) produces formate and 2-keto-4-methylthiobutyrate (KMTB), the alpha-ketoacid precursor of methionine in the methionine recycle pathway. Ni-containing acireductone dioxygenase (Ni-ARD) produces methylthiopropionate, carbon monoxide and formate, and does not lie on the methionine recycle pathway. The chain is Acireductone dioxygenase from Methylococcus capsulatus (strain ATCC 33009 / NCIMB 11132 / Bath).